A 456-amino-acid chain; its full sequence is Ribosomal protein uS12 methylthiotransferase RimO (456 aa).

Residues 11–126 (PKVGFVSLGC…VMQAVHTHLP (116 aa)) form the MTTase N-terminal domain. Residues Cys20, Cys56, Cys85, Cys157, Cys161, and Cys164 each coordinate [4Fe-4S] cluster. Positions 143–384 (LTPKHYAYLK…MEVAEEVSAR (242 aa)) constitute a Radical SAM core domain. The TRAM domain occupies 387–456 (QRKVGQTLRV…DGHDLWGEVA (70 aa)).

It belongs to the methylthiotransferase family. RimO subfamily. [4Fe-4S] cluster serves as cofactor.

It localises to the cytoplasm. It carries out the reaction L-aspartate(89)-[ribosomal protein uS12]-hydrogen + (sulfur carrier)-SH + AH2 + 2 S-adenosyl-L-methionine = 3-methylsulfanyl-L-aspartate(89)-[ribosomal protein uS12]-hydrogen + (sulfur carrier)-H + 5'-deoxyadenosine + L-methionine + A + S-adenosyl-L-homocysteine + 2 H(+). In terms of biological role, catalyzes the methylthiolation of an aspartic acid residue of ribosomal protein uS12. In Cupriavidus metallidurans (strain ATCC 43123 / DSM 2839 / NBRC 102507 / CH34) (Ralstonia metallidurans), this protein is Ribosomal protein uS12 methylthiotransferase RimO.